A 186-amino-acid polypeptide reads, in one-letter code: Acireductone dioxygenase (186 aa).

The Fe(2+) site is built by His96, His98, Glu102, and His140. His96, His98, Glu102, and His140 together coordinate Ni(2+).

Belongs to the acireductone dioxygenase (ARD) family. In terms of assembly, monomer. The cofactor is Fe(2+). Ni(2+) serves as cofactor.

It catalyses the reaction 1,2-dihydroxy-5-(methylsulfanyl)pent-1-en-3-one + O2 = 3-(methylsulfanyl)propanoate + CO + formate + 2 H(+). The catalysed reaction is 1,2-dihydroxy-5-(methylsulfanyl)pent-1-en-3-one + O2 = 4-methylsulfanyl-2-oxobutanoate + formate + 2 H(+). Its pathway is amino-acid biosynthesis; L-methionine biosynthesis via salvage pathway; L-methionine from S-methyl-5-thio-alpha-D-ribose 1-phosphate: step 5/6. Catalyzes 2 different reactions between oxygen and the acireductone 1,2-dihydroxy-3-keto-5-methylthiopentene (DHK-MTPene) depending upon the metal bound in the active site. Fe-containing acireductone dioxygenase (Fe-ARD) produces formate and 2-keto-4-methylthiobutyrate (KMTB), the alpha-ketoacid precursor of methionine in the methionine recycle pathway. Ni-containing acireductone dioxygenase (Ni-ARD) produces methylthiopropionate, carbon monoxide and formate, and does not lie on the methionine recycle pathway. This chain is Acireductone dioxygenase, found in Methylococcus capsulatus (strain ATCC 33009 / NCIMB 11132 / Bath).